We begin with the raw amino-acid sequence, 312 residues long: Methionyl-tRNA formyltransferase (312 aa).

117 to 120 (SLLP) lines the (6S)-5,6,7,8-tetrahydrofolate pocket.

The protein belongs to the Fmt family.

The catalysed reaction is L-methionyl-tRNA(fMet) + (6R)-10-formyltetrahydrofolate = N-formyl-L-methionyl-tRNA(fMet) + (6S)-5,6,7,8-tetrahydrofolate + H(+). In terms of biological role, attaches a formyl group to the free amino group of methionyl-tRNA(fMet). The formyl group appears to play a dual role in the initiator identity of N-formylmethionyl-tRNA by promoting its recognition by IF2 and preventing the misappropriation of this tRNA by the elongation apparatus. This chain is Methionyl-tRNA formyltransferase, found in Bordetella bronchiseptica (strain ATCC BAA-588 / NCTC 13252 / RB50) (Alcaligenes bronchisepticus).